The chain runs to 393 residues: Fructose-bisphosphate aldolase 4, cytosolic (393 aa).

Arginine 73 lines the substrate pocket. Cysteine 207 is subject to S-glutathionyl cysteine; transient; alternate. Cysteine 207 is modified (S-nitrosocysteine; transient; alternate). Glutamate 217 acts as the Proton acceptor in catalysis. Lysine 259 acts as the Schiff-base intermediate with dihydroxyacetone-P in catalysis. Residues 301–303 and arginine 333 contribute to the substrate site; that span reads SGG.

The protein belongs to the class I fructose-bisphosphate aldolase family. As to quaternary structure, homotetramer. Post-translationally, S-glutathionylated at Cys-207. In terms of processing, S-nitrosylated at Cys-207. As to expression, highly expressed in flowers.

It localises to the cytoplasm. The protein localises to the cytosol. It carries out the reaction beta-D-fructose 1,6-bisphosphate = D-glyceraldehyde 3-phosphate + dihydroxyacetone phosphate. The protein operates within carbohydrate degradation; glycolysis; D-glyceraldehyde 3-phosphate and glycerone phosphate from D-glucose: step 4/4. Its function is as follows. Fructose-bisphosphate aldolase that plays a key role in glycolysis and gluconeogenesis. This Arabidopsis thaliana (Mouse-ear cress) protein is Fructose-bisphosphate aldolase 4, cytosolic.